The following is a 423-amino-acid chain: Enolase (423 aa).

Position 166 (Q166) interacts with (2R)-2-phosphoglycerate. The Proton donor role is filled by E208. Mg(2+)-binding residues include D242, E283, and D310. K335, R364, S365, and K386 together coordinate (2R)-2-phosphoglycerate. The Proton acceptor role is filled by K335.

The protein belongs to the enolase family. Requires Mg(2+) as cofactor.

The protein localises to the cytoplasm. It localises to the secreted. Its subcellular location is the cell surface. The enzyme catalyses (2R)-2-phosphoglycerate = phosphoenolpyruvate + H2O. The protein operates within carbohydrate degradation; glycolysis; pyruvate from D-glyceraldehyde 3-phosphate: step 4/5. Catalyzes the reversible conversion of 2-phosphoglycerate (2-PG) into phosphoenolpyruvate (PEP). It is essential for the degradation of carbohydrates via glycolysis. This Elusimicrobium minutum (strain Pei191) protein is Enolase.